Here is a 763-residue protein sequence, read N- to C-terminus: Hormone-sensitive lipase (763 aa).

An Involved in the stabilization of the negatively charged intermediate by the formation of the oxyanion hole motif is present at residues 350-352 (HGG). Ser424 is an active-site residue. Position 552 is a phosphoserine (Ser552). Ser554 is subject to Phosphoserine; by AMPK. Phosphoserine occurs at positions 595, 627, and 649. Basic and acidic residues predominate over residues 616-627 (AREEAEAKEGLS). Positions 616 to 652 (AREEAEAKEGLSAKDGSSRVSNAFPEGFHPRRTSQGA) are disordered. Residues Asp692 and His722 contribute to the active site.

This sequence belongs to the 'GDXG' lipolytic enzyme family. In terms of assembly, monomer and homodimer. Interacts with CAVIN1 in the adipocyte cytoplasm. Interacts with PLIN5. In terms of processing, phosphorylation by AMPK reduces its translocation towards the lipid droplets.

Its subcellular location is the cell membrane. The protein localises to the membrane. It localises to the caveola. It is found in the cytoplasm. The protein resides in the cytosol. Its subcellular location is the lipid droplet. The catalysed reaction is a diacylglycerol + H2O = a monoacylglycerol + a fatty acid + H(+). It carries out the reaction a triacylglycerol + H2O = a diacylglycerol + a fatty acid + H(+). The enzyme catalyses a monoacylglycerol + H2O = glycerol + a fatty acid + H(+). It catalyses the reaction Hydrolyzes glycerol monoesters of long-chain fatty acids.. The catalysed reaction is 1,2-di-(9Z-octadecenoyl)-glycerol + (9Z)-octadecenoate + H(+) = 1,2,3-tri-(9Z-octadecenoyl)-glycerol + H2O. It carries out the reaction 2,3-di-(9Z)-octadecenoyl-sn-glycerol + H2O = 2-(9Z-octadecenoyl)-glycerol + (9Z)-octadecenoate + H(+). The enzyme catalyses cholesteryl (9Z-octadecenoate) + H2O = cholesterol + (9Z)-octadecenoate + H(+). It catalyses the reaction 1,2,3-tri-(9Z-octadecenoyl)-glycerol + H2O = di-(9Z)-octadecenoylglycerol + (9Z)-octadecenoate + H(+). The catalysed reaction is all-trans-retinyl hexadecanoate + H2O = all-trans-retinol + hexadecanoate + H(+). It carries out the reaction 1,2-di-(9Z-octadecenoyl)-glycerol + H2O = (9Z-octadecenoyl)-glycerol + (9Z)-octadecenoate + H(+). The enzyme catalyses 2-(5Z,8Z,11Z,14Z-eicosatetraenoyl)-glycerol + H2O = glycerol + (5Z,8Z,11Z,14Z)-eicosatetraenoate + H(+). It catalyses the reaction 1-(9Z-octadecenoyl)-glycerol + H2O = glycerol + (9Z)-octadecenoate + H(+). The catalysed reaction is 2-(9Z-octadecenoyl)-glycerol + H2O = glycerol + (9Z)-octadecenoate + H(+). It carries out the reaction 1-O-hexadecyl-2-acetyl-sn-glycerol + H2O = 1-O-hexadecyl-sn-glycerol + acetate + H(+). The enzyme catalyses 1,2-di-(9Z-octadecenoyl)-sn-glycerol + H2O = (9Z-octadecenoyl)-glycerol + (9Z)-octadecenoate + H(+). It catalyses the reaction 1,3-di-(9Z-octadecenoyl)-glycerol + H2O = 1-(9Z-octadecenoyl)-glycerol + (9Z)-octadecenoate + H(+). The catalysed reaction is 1,2-di-(9Z-octadecenoyl)-glycerol + H2O = 2-(9Z-octadecenoyl)-glycerol + (9Z)-octadecenoate + H(+). It participates in glycerolipid metabolism; triacylglycerol degradation. Functionally, lipase with broad substrate specificity, catalyzing the hydrolysis of triacylglycerols (TAGs), diacylglycerols (DAGs), monoacylglycerols (MAGs), cholesteryl esters and retinyl esters. Shows a preferential hydrolysis of DAGs over TAGs and MAGs. Preferentially hydrolyzes fatty acid (FA) esters at the sn-3 position of the glycerol backbone in DAGs and FA esters at the sn-1 and sn-2 positions of the glycerol backbone in TAGs. Catalyzes the hydrolysis of 2-arachidonoylglycerol, an endocannabinoid and of 2-acetyl monoalkylglycerol ether, the penultimate precursor of the pathway for de novo synthesis of platelet-activating factor. In adipose tissue and heart, it primarily hydrolyzes stored triglycerides to free fatty acids, while in steroidogenic tissues, it principally converts cholesteryl esters to free cholesterol for steroid hormone production. This Ictidomys tridecemlineatus (Thirteen-lined ground squirrel) protein is Hormone-sensitive lipase (LIPE).